Here is a 202-residue protein sequence, read N- to C-terminus: V-type ATP synthase subunit D (202 aa).

The protein belongs to the V-ATPase D subunit family.

In terms of biological role, produces ATP from ADP in the presence of a proton gradient across the membrane. The polypeptide is V-type ATP synthase subunit D (atpD) (Borreliella burgdorferi (strain ATCC 35210 / DSM 4680 / CIP 102532 / B31) (Borrelia burgdorferi)).